The chain runs to 235 residues: Probable tetraspanin tspA (235 aa).

Residues 1 to 18 (MVDTSNLLPQTPRLLKVP) lie on the Cytoplasmic side of the membrane. A helical transmembrane segment spans residues 19–39 (LIILNIILWILGLVLVIVGGI). Topologically, residues 40–68 (CVSFLSNFKDFTKASDAKSALSNLTTSIP) are extracellular. N-linked (GlcNAc...) asparagine glycosylation occurs at Asn62. A helical membrane pass occupies residues 69–89 (AGVLVIGILFVIFTVVGCFVA). Residues 90 to 93 (YKEK) are Cytoplasmic-facing. Residues 94–114 (LVGLVIYCAVMLILLVILIGV) form a helical membrane-spanning segment. At 115-200 (GGKAITLHND…FSSKIYAVGA (86 aa)) the chain is on the extracellular side. Residues Asn139, Asn143, and Asn160 are each glycosylated (N-linked (GlcNAc...) asparagine). The chain crosses the membrane as a helical span at residues 201–221 (AGLAIGIIELVAILFSLFLII). At 222–235 (RICRSPRTRSYDQY) the chain is on the cytoplasmic side.

Belongs to the tetraspanin (TM4SF) family.

The protein localises to the membrane. This Dictyostelium discoideum (Social amoeba) protein is Probable tetraspanin tspA (tspA).